A 454-amino-acid chain; its full sequence is Histidine--tRNA ligase (454 aa).

Belongs to the class-II aminoacyl-tRNA synthetase family. As to quaternary structure, homodimer.

Its subcellular location is the cytoplasm. The catalysed reaction is tRNA(His) + L-histidine + ATP = L-histidyl-tRNA(His) + AMP + diphosphate + H(+). In Porphyromonas gingivalis (strain ATCC BAA-308 / W83), this protein is Histidine--tRNA ligase.